We begin with the raw amino-acid sequence, 233 residues long: Counting factor-associated protein A (233 aa).

A signal peptide spans 1 to 21 (MKLLNSLILLVLTCLVSSINT). Residues Asn37 and Asn189 are each glycosylated (N-linked (GlcNAc...) asparagine).

The protein resides in the secreted. This chain is Counting factor-associated protein A (cfaA), found in Dictyostelium discoideum (Social amoeba).